Here is a 249-residue protein sequence, read N- to C-terminus: MFTLRRKKQDIKLSKIPAHIGIIMDGNGRWAKKRMKPRVFGHKAGMDALQDVTIAASELGVKILTVYAFSTENWARPQEEVKFIMNLPVEFFDKYVPKLHKNNVRILVIGDKEELPAATLDALERARELTKHNSGLILNFALNYGGRAEIVDAVKLIAQDVLDARFNPGDITEGLIADYLMTSNLPYLYRDPDLIIRTSGELRLSNFLPWQAAYSELYFTDTLWPDFDKKALYLAIEEFNHRHRRFGGV.

The active site involves Asp-25. Position 25 (Asp-25) interacts with Mg(2+). Substrate contacts are provided by residues 26-29 (GNGR), Trp-30, Arg-38, His-42, and 70-72 (STE). The active-site Proton acceptor is the Asn-73. Substrate-binding positions include Trp-74, Arg-76, Arg-197, and 203–205 (RLS). Glu-216 provides a ligand contact to Mg(2+).

It belongs to the UPP synthase family. In terms of assembly, homodimer. Requires Mg(2+) as cofactor.

Catalyzes the condensation of isopentenyl diphosphate (IPP) with allylic pyrophosphates generating different type of terpenoids. The chain is Isoprenyl transferase from Streptococcus mutans serotype c (strain ATCC 700610 / UA159).